A 430-amino-acid polypeptide reads, in one-letter code: MSKTHLTEQKFSDFALHPQVIEALETKGFHNCTPIQALALPFTLSGRDVAGQAQTGTGKTMAFLTSTFHHLLSHPAPEGRQTNQPRALILAPTRELAVQIHADAEPLAQITGLKLGLAYGGDGYDKQLKVLENGVDVLIGTTGRLIDYAKQNHVNLGAIQVVVLDEADRMFDLGFIKDIRWLFRRMPAANQRLNMLFSATLSFRVRELAFENMNNAEYVEVEPDQKTGHRIKEELFYPSNEEKMRLLQTLIEEEWPDRTIIFANTKHRCEDVWGHLAADGHRVGLLTGDVAQKKRLRILDDFTKGDVDILVATDVAARGLHIPAVTHVFNYDLPDDREDYVHRIGRTGRAGANGHSISLACEEYALNLPAIEEYIGHSITVSRYNSDALMTDLPPPKRLTRNRSGNGPRRGGNNNRRSSASRSPNRKRSG.

Residues Gln9–Ala37 carry the Q motif motif. Positions Leu40 to Val219 constitute a Helicase ATP-binding domain. Residue Ala53 to Thr60 coordinates ATP. A DEAD box motif is present at residues Asp165–Asp168. In terms of domain architecture, Helicase C-terminal spans Arg245–Met390. A disordered region spans residues Ala388–Gly430. The segment covering Asn402–Ser423 has biased composition (low complexity).

Belongs to the DEAD box helicase family. RhlB subfamily. Component of the RNA degradosome, which is a multiprotein complex involved in RNA processing and mRNA degradation.

Its subcellular location is the cytoplasm. It catalyses the reaction ATP + H2O = ADP + phosphate + H(+). DEAD-box RNA helicase involved in RNA degradation. Has RNA-dependent ATPase activity and unwinds double-stranded RNA. In Erwinia tasmaniensis (strain DSM 17950 / CFBP 7177 / CIP 109463 / NCPPB 4357 / Et1/99), this protein is ATP-dependent RNA helicase RhlB.